An 837-amino-acid chain; its full sequence is MEPAAGTPGPLIMNNKQPQPPPPPPPATAQPPPGAPRTAGGLLPGGKAREFNRNQRKDSEGYSESPDLEFEYADTDKWAAELSELYSYTEGPEFLMNRKCFEEDFRMHVTDKKWTELDTNQHRTHAMRLLDGLEVTAREKRLKVARAILYVAQGTFGECSSEAEVQSWMRYNTFLLLEVGTFNALVELLNMEIDNSAACSSAVRKPAISLADSTDLRVLLNIMYLIVETVHQECEGDKAEWRTMRQTFRAELGSPLYNNEPFAIMLFGMVTKFCSGHAPHFPMKKVLLLLWKTVLCTLGGFEELQSMKAEKRAILGLPPLPEDSIKVIRNMRAASPPASASDLIEQQQKRGRREHKALIKQDNLDAFNERDPYKADDSREEEEENDDDNSLEGETFPLERDEVMPPPLQHPQTDRLTCPKGLPWAPKVREKDIEMFLESSRSKFIGYTLGSDTNTVVGLPRPIHESIKTLKQHKYTSIAEVQAQMEEEYLRSPLSGGEEEVEQVPAETLYQGLLPSLPQYMIALLKILLAAAPTSKAKTDSINILADVLPEEMPTTVLQSMKLGVDVNRHKEVIVKAISAVLLLLLKHFKLNHVYQFEYMAQHLVFANCIPLILKFFNQNIMSYITAKNSISVLDYPHCVVHELPELTAESLEAGDNNQFCWRNLFSCINLLRILNKLTKWKHSRTMMLVVFKSAPILKRALKVKQAMMQLYVLKLLKVQTKYLGRQWRKSNMKTMSAIYQKVRHRLNDDWAYGNDLDARPWDFQAEECALRANIERFNARRYDRAHSNPDFLPVDNCLQSVLGQRVDLPEDFQMNYDLWLEREVFSKPISWEELLQ.

Position 1 is an N-acetylmethionine (Met1). The segment at 1–67 is disordered; the sequence is MEPAAGTPGP…DSEGYSESPD (67 aa). The segment covering 18-35 has biased composition (pro residues); sequence PQPPPPPPPATAQPPPGA. The segment covering 47–60 has biased composition (basic and acidic residues); that stretch reads KAREFNRNQRKDSE. Ser59, Ser335, and Ser339 each carry phosphoserine. Residues 336–423 are disordered; the sequence is PPASASDLIE…DRLTCPKGLP (88 aa). Residues 356-377 are compositionally biased toward basic and acidic residues; the sequence is KALIKQDNLDAFNERDPYKADD. The segment covering 378–391 has biased composition (acidic residues); the sequence is SREEEEENDDDNSL. Ser788 carries the phosphoserine modification. Residues 796 to 837 form a required for STRIPAK core complex formation region; that stretch reads DNCLQSVLGQRVDLPEDFQMNYDLWLEREVFSKPISWEELLQ.

This sequence belongs to the STRIP family. In terms of assembly, part of the core of STRIPAK complexes composed of PP2A catalytic and scaffolding subunits, the striatins (PP2A regulatory subunits), the striatin-associated proteins MOB4, STRIP1 and STRIP2, PDCD10 and members of the STE20 kinases, such as STK24 and STK26. The STRIPAK complex can be extended by adapter proteins such as SLMAP:SIKE1, CTTNBP2 or CTTNBP2NL. Interacts with CDC42BPB. Interacts with CTTNBP2NL.

The protein resides in the cytoplasm. Its function is as follows. Plays a role in the regulation of cell morphology and cytoskeletal organization. Required in the cortical actin filament dynamics and cell shape. Part of the striatin-interacting phosphatase and kinase (STRIPAK) complexes. STRIPAK complexes have critical roles in protein (de)phosphorylation and are regulators of multiple signaling pathways including Hippo, MAPK, nuclear receptor and cytoskeleton remodeling. Different types of STRIPAK complexes are involved in a variety of biological processes such as cell growth, differentiation, apoptosis, metabolism and immune regulation. The protein is Striatin-interacting protein 1 (STRIP1) of Bos taurus (Bovine).